The primary structure comprises 278 residues: Phosphatidylglycerol--prolipoprotein diacylglyceryl transferase (278 aa).

A run of 3 helical transmembrane segments spans residues 21–41, 54–74, and 88–108; these read WYGIIIAMGILLGYFIAQASV, IIFWSAIFGFIIARIYFVIFQ, and IWQGGIAIHGGLIGGFVTGII. Arg136 is an a 1,2-diacyl-sn-glycero-3-phospho-(1'-sn-glycerol) binding site. 3 helical membrane-spanning segments follow: residues 176 to 196, 202 to 222, and 234 to 254; these read QPTFLYESIWDVLGFVILILL, IGDTFCLYLIWYSIGRFFVEG, and IRIAQLMSIILIIIGVVIMIV.

This sequence belongs to the Lgt family.

It is found in the cell membrane. It catalyses the reaction L-cysteinyl-[prolipoprotein] + a 1,2-diacyl-sn-glycero-3-phospho-(1'-sn-glycerol) = an S-1,2-diacyl-sn-glyceryl-L-cysteinyl-[prolipoprotein] + sn-glycerol 1-phosphate + H(+). It functions in the pathway protein modification; lipoprotein biosynthesis (diacylglyceryl transfer). In terms of biological role, catalyzes the transfer of the diacylglyceryl group from phosphatidylglycerol to the sulfhydryl group of the N-terminal cysteine of a prolipoprotein, the first step in the formation of mature lipoproteins. In Staphylococcus saprophyticus subsp. saprophyticus (strain ATCC 15305 / DSM 20229 / NCIMB 8711 / NCTC 7292 / S-41), this protein is Phosphatidylglycerol--prolipoprotein diacylglyceryl transferase.